The chain runs to 109 residues: Putative membrane protein insertion efficiency factor (109 aa).

The protein belongs to the UPF0161 family.

The protein localises to the cell inner membrane. Could be involved in insertion of integral membrane proteins into the membrane. This Rhodopseudomonas palustris (strain BisA53) protein is Putative membrane protein insertion efficiency factor.